The following is a 386-amino-acid chain: Signal transduction histidine-protein kinase/phosphatase DegS (386 aa).

The Histidine kinase domain maps to 188-384; sequence KLSREIHDGP…TIIISIPITT (197 aa). Histidine 194 bears the Phosphohistidine; by autocatalysis mark.

In terms of processing, autophosphorylated.

It localises to the cytoplasm. The catalysed reaction is ATP + protein L-histidine = ADP + protein N-phospho-L-histidine.. Functionally, member of the two-component regulatory system DegS/DegU, which plays an important role in the transition growth phase. Acts as both a protein kinase that undergoes autophosphorylation and subsequently transfers the phosphate to DegU, and a protein phosphatase that dephosphorylates phospho-DegU. The chain is Signal transduction histidine-protein kinase/phosphatase DegS (degS) from Brevibacillus brevis (Bacillus brevis).